The following is a 180-amino-acid chain: PLASMODESMATA CALLOSE-BINDING PROTEIN 5 (180 aa).

A signal peptide spans 1-29; sequence MIMSLPQCSHLRLSILAATAAMLMVITTA. C42 and C105 form a disulfide bridge. A disordered region spans residues 126 to 151; the sequence is PSSKGANNGRLADDTSMGAGQADMSR. The GPI-anchor amidated serine moiety is linked to residue S157. Positions 158-180 are cleaved as a propeptide — removed in mature form; that stretch reads SSWMVTFIGFGSLLTMTWIIHHL.

In terms of processing, contains two additional disulfide bonds.

It localises to the cell membrane. Its subcellular location is the cell junction. The protein localises to the plasmodesma. The protein is PLASMODESMATA CALLOSE-BINDING PROTEIN 5 (PDCB5) of Arabidopsis thaliana (Mouse-ear cress).